The chain runs to 164 residues: FMN reductase (NADH) RutF (164 aa).

It belongs to the non-flavoprotein flavin reductase family. RutF subfamily.

The catalysed reaction is FMNH2 + NAD(+) = FMN + NADH + 2 H(+). In terms of biological role, catalyzes the reduction of FMN to FMNH2 which is used to reduce pyrimidine by RutA via the Rut pathway. This is FMN reductase (NADH) RutF from Escherichia coli O6:K15:H31 (strain 536 / UPEC).